Here is a 229-residue protein sequence, read N- to C-terminus: Dihydrofolate reductase (229 aa).

A DHFR domain is found at 11–227 (SITAVVAATA…VKYIFEMWVL (217 aa)). Residues alanine 17 and 23–29 (GIGLNGG) contribute to the NADP(+) site. Residue 37-42 (EMKYFA) coordinates substrate. 64–66 (RKT) lines the NADP(+) pocket. Residue arginine 80 coordinates substrate. NADP(+) contacts are provided by residues 86–88 (SGK) and 127–134 (GGATLYTS).

The protein belongs to the dihydrofolate reductase family. In terms of assembly, monomer.

It catalyses the reaction (6S)-5,6,7,8-tetrahydrofolate + NADP(+) = 7,8-dihydrofolate + NADPH + H(+). Its pathway is cofactor biosynthesis; tetrahydrofolate biosynthesis; 5,6,7,8-tetrahydrofolate from 7,8-dihydrofolate: step 1/1. In terms of biological role, key enzyme in folate metabolism. Catalyzes an essential reaction for de novo glycine and purine synthesis, and for DNA precursor synthesis. In Cryptococcus neoformans var. neoformans serotype D (strain JEC21 / ATCC MYA-565) (Filobasidiella neoformans), this protein is Dihydrofolate reductase (DFR1).